Reading from the N-terminus, the 531-residue chain is Sop-2-related protein 3 (531 aa).

Expressed ubiquitously.

The protein resides in the cytoplasm. The protein localises to the nucleus. Its function is as follows. Probably acts synergistically with sop-2 to maintain the transcriptionally repressive state of homeotic genes in order to regulate various neurogenic identities. Specification of some neuronal identities also involves expression of non-Hox genes. Specifies dopaminergic and serotonergic neuronal cell fate, and regulates neurotransmitter choice and axon pathfinding. The polypeptide is Sop-2-related protein 3 (sor-3) (Caenorhabditis elegans).